We begin with the raw amino-acid sequence, 176 residues long: Ferritin, higher subunit (176 aa).

The Ferritin-like diiron domain occupies 7–156 (QNFHRDCEAA…DYITNLKRLG (150 aa)). Residues Glu-24, Glu-58, Glu-59, His-62, Glu-104, and Gln-138 each contribute to the Fe cation site.

It belongs to the ferritin family. Oligomer of 24 subunits. The functional molecule is roughly spherical and contains a central cavity into which the polymeric mineral iron core is deposited.

The enzyme catalyses 4 Fe(2+) + O2 + 4 H(+) = 4 Fe(3+) + 2 H2O. Its function is as follows. Stores iron in a soluble, non-toxic, readily available form. Important for iron homeostasis. Has ferroxidase activity. Iron is taken up in the ferrous form and deposited as ferric hydroxides after oxidation. The chain is Ferritin, higher subunit from Aquarana catesbeiana (American bullfrog).